The following is a 192-amino-acid chain: MLGKKVVVTGVPGVGKTTVINGAMERLATEGVAYKAVNFGTFMFEVAKKENLASDRDEMRKLEKDVQKRLQQAAATGIAAMSGEANIIIDTHSTVKTPTGFLAGLPEWVLRELMPDIVVLVETDPDQILMRRLGDASRARDMEGYRAIAEHQEFNRAVSAAYAMYTGCTIKIVRNENFLLEQGIDDLVSVLR.

10–18 (GVPGVGKTT) serves as a coordination point for ATP.

Belongs to the archaeal adenylate kinase family.

The protein resides in the cytoplasm. It catalyses the reaction AMP + ATP = 2 ADP. The protein is Adenylate kinase of Methanoculleus marisnigri (strain ATCC 35101 / DSM 1498 / JR1).